A 659-amino-acid chain; its full sequence is Threonine--tRNA ligase (659 aa).

In terms of domain architecture, TGS spans 1–60 (MTVYLPDGKPLELPEGATAKDVARALGEGWERRAVGAIVDGELYDLLKPLPQGAKVRLLT). Catalytic regions lie at residues 234 to 548 (TAEE…EHFA) and 252 to 552 (DHRR…GDFP). Residues C349, H400, and H529 each coordinate Zn(2+).

Belongs to the class-II aminoacyl-tRNA synthetase family. As to quaternary structure, homodimer. The cofactor is Zn(2+).

The protein localises to the cytoplasm. It catalyses the reaction tRNA(Thr) + L-threonine + ATP = L-threonyl-tRNA(Thr) + AMP + diphosphate + H(+). Its function is as follows. Catalyzes the attachment of threonine to tRNA(Thr) in a two-step reaction: L-threonine is first activated by ATP to form Thr-AMP and then transferred to the acceptor end of tRNA(Thr). Also edits incorrectly charged L-seryl-tRNA(Thr). This chain is Threonine--tRNA ligase, found in Thermus thermophilus (strain ATCC 27634 / DSM 579 / HB8).